Reading from the N-terminus, the 319-residue chain is Ferrochelatase (319 aa).

Fe cation contacts are provided by histidine 193 and glutamate 274.

The protein belongs to the ferrochelatase family.

The protein resides in the cytoplasm. The enzyme catalyses heme b + 2 H(+) = protoporphyrin IX + Fe(2+). Its pathway is porphyrin-containing compound metabolism; protoheme biosynthesis; protoheme from protoporphyrin-IX: step 1/1. Catalyzes the ferrous insertion into protoporphyrin IX. This Erwinia tasmaniensis (strain DSM 17950 / CFBP 7177 / CIP 109463 / NCPPB 4357 / Et1/99) protein is Ferrochelatase.